The sequence spans 333 residues: UPF0285 protein MTH_1441 (333 aa).

It belongs to the UPF0285 family.

The polypeptide is UPF0285 protein MTH_1441 (Methanothermobacter thermautotrophicus (strain ATCC 29096 / DSM 1053 / JCM 10044 / NBRC 100330 / Delta H) (Methanobacterium thermoautotrophicum)).